Consider the following 360-residue polypeptide: Melanoma-associated antigen B16 (360 aa).

Positions 1–118 (MSQKNPEYAA…GNSVIPPDQP (118 aa)) are disordered. Residues 9-19 (AADHDHTREEM) are compositionally biased toward basic and acidic residues. Positions 63–98 (CSSSQLLTASNQEDPAYETPSTSRGLQHPYVSSSES) are enriched in polar residues. In terms of domain architecture, MAGE spans 125–324 (IDGKVNFLVN…TVFPSQYEEA (200 aa)). Residues 340–360 (AGPSSASGESSSDMGSNVPHI) form a disordered region. Residues 341–360 (GPSSASGESSSDMGSNVPHI) show a composition bias toward low complexity.

The chain is Melanoma-associated antigen B16 (Mageb16) from Rattus norvegicus (Rat).